We begin with the raw amino-acid sequence, 231 residues long: Quercetin 2,3-dioxygenase (231 aa).

A divalent metal cation-binding residues include His57, His59, His101, and Glu103.

It belongs to the pirin family. Zn(2+) is required as a cofactor. The cofactor is Co(2+). It depends on Fe(2+) as a cofactor.

It catalyses the reaction quercetin + O2 = 2-(3,4-dihydroxybenzoyloxy)-4,6-dihydroxybenzoate + CO. The protein operates within flavonoid metabolism; quercetin degradation. With respect to regulation, inhibited by kojic acid, sodium diethyldithiocarbamate and 1,10-phenanthroline monohydrochloride. Has quercetin 2,3-dioxygenase activity in vitro. Its physiological role is unknown; however, may provide a mechanism that would avoid inhibition of key cellular proteins, such as DNA gyrase, by quercetin. In Escherichia coli (strain K12), this protein is Quercetin 2,3-dioxygenase (yhhW).